We begin with the raw amino-acid sequence, 270 residues long: Phospholipase A and acyltransferase 5 (270 aa).

Disordered regions lie at residues 1-54 (MGLS…SASS) and 70-122 (RRLE…NPRP). Polar residues-rich tracts occupy residues 24-54 (TQISKTSSTESSDTQSATGQSTVPHSDSASS) and 100-116 (IPTSNSEIESTQKNQAV). An LRAT domain is found at 127–240 (LIEIFRIGYE…LRYGVPRSQQ (114 aa)). Residues His-137 and His-149 contribute to the active site. Residue Cys-224 is the Acyl-thioester intermediate of the active site.

The protein belongs to the H-rev107 family. In terms of tissue distribution, isoform 4 shows highest expression level in testis.

The protein resides in the cytoplasm. It is found in the cytosol. It catalyses the reaction a 1,2-diacyl-sn-glycero-3-phosphocholine + H2O = a 1-acyl-sn-glycero-3-phosphocholine + a fatty acid + H(+). The enzyme catalyses a 1,2-diacyl-sn-glycero-3-phosphocholine + H2O = a 2-acyl-sn-glycero-3-phosphocholine + a fatty acid + H(+). The catalysed reaction is 1-hexadecanoyl-2-(5Z,8Z,11Z,14Z-eicosatetraenoyl)-sn-glycero-3-phosphocholine + 1,2-di-(9Z-octadecenoyl)-sn-glycero-3-phosphoethanolamine = N-(5Z,8Z,11Z,14Z-eicosatetraenoyl)-1,2-di-(9Z-octadecenoyl)-sn-glycero-3-phosphoethanolamine + 1-hexadecanoyl-sn-glycero-3-phosphocholine + H(+). It carries out the reaction 1,2-di-(9Z-octadecenoyl)-sn-glycero-3-phosphoethanolamine + 1,2-dihexadecanoyl-sn-glycero-3-phosphocholine = N-hexadecanoyl-1,2-di-(9Z-octadecenoyl)-sn-glycero-3-phosphoethanolamine + 1-hexadecanoyl-sn-glycero-3-phosphocholine + H(+). It catalyses the reaction 1,2-di-(9Z-octadecenoyl)-sn-glycero-3-phosphoethanolamine + 1,2-dihexadecanoyl-sn-glycero-3-phosphocholine = N-hexadecanoyl-1,2-di-(9Z-octadecenoyl)-sn-glycero-3-phosphoethanolamine + 2-hexadecanoyl-sn-glycero-3-phosphocholine + H(+). The enzyme catalyses a 1,2-diacyl-sn-glycero-3-phosphoethanolamine + a 1,2-diacyl-sn-glycero-3-phosphocholine = an N-acyl-1,2-diacyl-sn-glycero-3-phosphoethanolamine + a 1-acyl-sn-glycero-3-phosphocholine + H(+). The catalysed reaction is a 1,2-diacyl-sn-glycero-3-phosphoethanolamine + a 1,2-diacyl-sn-glycero-3-phosphocholine = an N-acyl-1,2-diacyl-sn-glycero-3-phosphoethanolamine + a 2-acyl-sn-glycero-3-phosphocholine + H(+). It carries out the reaction 1-hexadecanoyl-2-(9Z-octadecenoyl)-sn-glycero-3-phosphocholine + 1,2-di-(9Z-octadecenoyl)-sn-glycero-3-phosphoethanolamine = N,1,2-tri-(9Z-octadecenoyl)-sn-glycero-3-phosphoethanolamine + 1-hexadecanoyl-sn-glycero-3-phosphocholine + H(+). Exhibits both phospholipase A1/2 and acyltransferase activities. Shows phospholipase A1 (PLA1) and A2 (PLA2) activity, catalyzing the calcium-independent release of fatty acids from the sn-1 or sn-2 position of glycerophospholipids. Shows N-acyltransferase activity, catalyzing the calcium-independent transfer of a fatty acyl group at the sn-1 position of phosphatidylcholine (PC) and other glycerophospholipids to the primary amine of phosphatidylethanolamine (PE), forming N-acylphosphatidylethanolamine (NAPE), which serves as precursor for N-acylethanolamines (NAEs). This Mus musculus (Mouse) protein is Phospholipase A and acyltransferase 5.